Here is a 308-residue protein sequence, read N- to C-terminus: Methionyl-tRNA formyltransferase (308 aa).

Serine 109–proline 112 provides a ligand contact to (6S)-5,6,7,8-tetrahydrofolate.

This sequence belongs to the Fmt family.

It catalyses the reaction L-methionyl-tRNA(fMet) + (6R)-10-formyltetrahydrofolate = N-formyl-L-methionyl-tRNA(fMet) + (6S)-5,6,7,8-tetrahydrofolate + H(+). Attaches a formyl group to the free amino group of methionyl-tRNA(fMet). The formyl group appears to play a dual role in the initiator identity of N-formylmethionyl-tRNA by promoting its recognition by IF2 and preventing the misappropriation of this tRNA by the elongation apparatus. This chain is Methionyl-tRNA formyltransferase, found in Caulobacter vibrioides (strain NA1000 / CB15N) (Caulobacter crescentus).